Here is a 209-residue protein sequence, read N- to C-terminus: Redox-sensing transcriptional repressor Rex (209 aa).

Residues 16-55 constitute a DNA-binding region (H-T-H motif); the sequence is LYYRFIQNLSLSGKQRVSSAELSEAVKVDSATIRRDFSYF. 90–95 is an NAD(+) binding site; sequence GVGNLG.

Belongs to the transcriptional regulatory Rex family. Homodimer.

The protein resides in the cytoplasm. In terms of biological role, modulates transcription in response to changes in cellular NADH/NAD(+) redox state. In Bacillus cytotoxicus (strain DSM 22905 / CIP 110041 / 391-98 / NVH 391-98), this protein is Redox-sensing transcriptional repressor Rex.